Consider the following 247-residue polypeptide: 2,3-bisphosphoglycerate-dependent phosphoglycerate mutase (247 aa).

Substrate-binding positions include 8–15 (RHGESTWN), 21–22 (TG), Arg-60, 87–90 (ERHY), Lys-98, 114–115 (RR), and 183–184 (GN). His-9 functions as the Tele-phosphohistidine intermediate in the catalytic mechanism. The Proton donor/acceptor role is filled by Glu-87.

This sequence belongs to the phosphoglycerate mutase family. BPG-dependent PGAM subfamily. Homodimer.

The catalysed reaction is (2R)-2-phosphoglycerate = (2R)-3-phosphoglycerate. Its pathway is carbohydrate degradation; glycolysis; pyruvate from D-glyceraldehyde 3-phosphate: step 3/5. Functionally, catalyzes the interconversion of 2-phosphoglycerate and 3-phosphoglycerate. The protein is 2,3-bisphosphoglycerate-dependent phosphoglycerate mutase of Leptothrix cholodnii (strain ATCC 51168 / LMG 8142 / SP-6) (Leptothrix discophora (strain SP-6)).